We begin with the raw amino-acid sequence, 265 residues long: Small ribosomal subunit protein uS2 (265 aa).

The protein belongs to the universal ribosomal protein uS2 family.

The sequence is that of Small ribosomal subunit protein uS2 from Aliarcobacter butzleri (strain RM4018) (Arcobacter butzleri).